The sequence spans 124 residues: CRISPR-associated endoribonuclease Cas2 4 (124 aa).

Mg(2+) is bound at residue Asp-40.

It belongs to the CRISPR-associated endoribonuclease Cas2 protein family. In terms of assembly, homodimer, forms a heterotetramer with a Cas1 homodimer. Mg(2+) is required as a cofactor.

CRISPR (clustered regularly interspaced short palindromic repeat), is an adaptive immune system that provides protection against mobile genetic elements (viruses, transposable elements and conjugative plasmids). CRISPR clusters contain sequences complementary to antecedent mobile elements and target invading nucleic acids. CRISPR clusters are transcribed and processed into CRISPR RNA (crRNA). Functions as a ssRNA-specific endoribonuclease. Involved in the integration of spacer DNA into the CRISPR cassette. The polypeptide is CRISPR-associated endoribonuclease Cas2 4 (Rhodospirillum rubrum (strain ATCC 11170 / ATH 1.1.1 / DSM 467 / LMG 4362 / NCIMB 8255 / S1)).